We begin with the raw amino-acid sequence, 365 residues long: Chaperone protein DnaJ (365 aa).

The 67-residue stretch at 4-70 (DYYKILGVDR…QKRRMYDQTG (67 aa)) folds into the J domain. The CR-type zinc finger occupies 139–220 (GTEKRIKYRR…CNGTGTVVVN (82 aa)). Residues Cys152, Cys155, Cys168, Cys171, Cys194, Cys197, Cys208, and Cys211 each coordinate Zn(2+). CXXCXGXG motif repeat units lie at residues 152-159 (CPDCNGTG), 168-175 (CPTCNGTG), 194-201 (CQTCGGRG), and 208-215 (CPRCNGTG).

This sequence belongs to the DnaJ family. In terms of assembly, homodimer. Requires Zn(2+) as cofactor.

The protein localises to the cytoplasm. Its function is as follows. Participates actively in the response to hyperosmotic and heat shock by preventing the aggregation of stress-denatured proteins and by disaggregating proteins, also in an autonomous, DnaK-independent fashion. Unfolded proteins bind initially to DnaJ; upon interaction with the DnaJ-bound protein, DnaK hydrolyzes its bound ATP, resulting in the formation of a stable complex. GrpE releases ADP from DnaK; ATP binding to DnaK triggers the release of the substrate protein, thus completing the reaction cycle. Several rounds of ATP-dependent interactions between DnaJ, DnaK and GrpE are required for fully efficient folding. Also involved, together with DnaK and GrpE, in the DNA replication of plasmids through activation of initiation proteins. The chain is Chaperone protein DnaJ from Thermoplasma acidophilum (strain ATCC 25905 / DSM 1728 / JCM 9062 / NBRC 15155 / AMRC-C165).